Here is a 499-residue protein sequence, read N- to C-terminus: Hexokinase-2, chloroplastic (499 aa).

The N-terminal 30 residues, 1-30, are a transit peptide targeting the chloroplast; sequence MSVTVSSPAGRSFHISRSPYKKISKPRVII. A Hexokinase domain is found at 39-490; it reads LAVAPILTKL…SGIGAALLAA (452 aa). The interval 94-232 is hexokinase small subdomain; the sequence is TGNEKGLFYA…GLGMQVSALV (139 aa). The ADP site is built by Gly108, Thr109, and Asn110. Residues Thr198, Lys199, Asn233, and Asp234 each contribute to the D-glucose site. The segment at 233-479 is hexokinase large subdomain; it reads NDTVATLAGA…KNVVIEHSKD (247 aa). Thr257 contributes to the ADP binding site. Asn260, Glu288, and Glu318 together coordinate D-glucose. Residue Gly444 coordinates ADP.

It belongs to the hexokinase family. In terms of tissue distribution, expressed in vascular starch sheath, xylem parenchyma, guard cells and root tips.

It localises to the plastid. It is found in the chloroplast stroma. It catalyses the reaction a D-hexose + ATP = a D-hexose 6-phosphate + ADP + H(+). The enzyme catalyses D-fructose + ATP = D-fructose 6-phosphate + ADP + H(+). The catalysed reaction is D-glucose + ATP = D-glucose 6-phosphate + ADP + H(+). It participates in carbohydrate metabolism; hexose metabolism. The protein operates within carbohydrate degradation; glycolysis; D-glyceraldehyde 3-phosphate and glycerone phosphate from D-glucose: step 1/4. Fructose and glucose phosphorylating enzyme. In Nicotiana tabacum (Common tobacco), this protein is Hexokinase-2, chloroplastic (HXK2).